Reading from the N-terminus, the 139-residue chain is Small ribosomal subunit protein uS12m (139 aa).

The interval 1–21 (MLSTLYQNDLKKKRNRRRNRS) is disordered. A compositionally biased stretch (basic residues) spans 11–20 (KKKRNRRRNR).

The protein belongs to the universal ribosomal protein uS12 family.

It localises to the mitochondrion. Its function is as follows. Protein S12 is involved in the translation initiation step. In Paramecium tetraurelia, this protein is Small ribosomal subunit protein uS12m (RPS12).